Reading from the N-terminus, the 375-residue chain is 1-deoxy-D-xylulose 5-phosphate reductoisomerase (375 aa).

Residues threonine 12, glycine 13, serine 14, isoleucine 15, asparagine 39, and asparagine 115 each coordinate NADPH. A 1-deoxy-D-xylulose 5-phosphate-binding site is contributed by lysine 116. An NADPH-binding site is contributed by glutamate 117. Aspartate 141 is a Mn(2+) binding site. Positions 142, 143, 163, and 186 each coordinate 1-deoxy-D-xylulose 5-phosphate. Glutamate 143 provides a ligand contact to Mn(2+). Glycine 192 provides a ligand contact to NADPH. 1-deoxy-D-xylulose 5-phosphate-binding residues include serine 199, asparagine 204, lysine 205, and glutamate 208. Residue glutamate 208 participates in Mn(2+) binding.

It belongs to the DXR family. Mg(2+) serves as cofactor. The cofactor is Mn(2+).

The enzyme catalyses 2-C-methyl-D-erythritol 4-phosphate + NADP(+) = 1-deoxy-D-xylulose 5-phosphate + NADPH + H(+). It participates in isoprenoid biosynthesis; isopentenyl diphosphate biosynthesis via DXP pathway; isopentenyl diphosphate from 1-deoxy-D-xylulose 5-phosphate: step 1/6. Its function is as follows. Catalyzes the NADPH-dependent rearrangement and reduction of 1-deoxy-D-xylulose-5-phosphate (DXP) to 2-C-methyl-D-erythritol 4-phosphate (MEP). The sequence is that of 1-deoxy-D-xylulose 5-phosphate reductoisomerase from Thermotoga neapolitana (strain ATCC 49049 / DSM 4359 / NBRC 107923 / NS-E).